The sequence spans 548 residues: Solute carrier family 22 member 7 (548 aa).

12 consecutive transmembrane segments (helical) span residues 21–41 (VALL…PIFL), 146–166 (AAST…GYLS), 180–200 (VSTL…MFAI), 204–224 (LTGS…LEWL), 234–254 (VLSS…GYLI), 259–279 (WLLL…WWVP), 346–366 (ISLC…GLSL), 376–397 (YQTQ…YLSV), 404–423 (LTQA…RLLV), 432–452 (TVLA…AYLF), 466–486 (MGLT…AALL), and 493–513 (LPKL…LLLP). The segment at 522 to 548 (ETIQDVERKSAPTSLQEEEMPMKQVQN) is disordered.

This sequence belongs to the major facilitator (TC 2.A.1) superfamily. Organic cation transporter (TC 2.A.1.19) family.

Its subcellular location is the basolateral cell membrane. It is found in the apical cell membrane. It localises to the cell membrane. The enzyme catalyses orotate(out) + L-glutamate(in) = orotate(in) + L-glutamate(out). It catalyses the reaction 3',5'-cyclic GMP(in) = 3',5'-cyclic GMP(out). The catalysed reaction is GMP(in) = GMP(out). It carries out the reaction 2'-deoxyguanosine(in) = 2'-deoxyguanosine(out). The enzyme catalyses GDP(in) = GDP(out). It catalyses the reaction guanosine(in) = guanosine(out). The catalysed reaction is GTP(in) = GTP(out). It carries out the reaction 3',5'-cyclic AMP(in) = 3',5'-cyclic AMP(out). The enzyme catalyses creatinine(in) = creatinine(out). It catalyses the reaction prostaglandin E2(out) = prostaglandin E2(in). The catalysed reaction is 2-oxoglutarate(in) = 2-oxoglutarate(out). It carries out the reaction glutarate(in) = glutarate(out). The enzyme catalyses urate(out) = urate(in). It catalyses the reaction estrone 3-sulfate(out) = estrone 3-sulfate(in). Its function is as follows. Functions as a Na(+)-independent bidirectional multispecific transporter. Contributes to the renal and hepatic elimination of endogenous organic compounds from the systemic circulation into the urine and bile, respectively. Capable of transporting a wide range of purine and pyrimidine nucleobases, nucleosides and nucleotides, with cGMP, 2'deoxyguanosine and GMP being the preferred substrates. Functions as a pH- and chloride-independent cGMP bidirectional facilitative transporter that can regulate both intracellular and extracellular levels of cGMP and may be involved in cGMP signaling pathways. Mediates orotate/glutamate bidirectional exchange and most likely display a physiological role in hepatic release of glutamate into the blood. Involved in renal secretion and possible reabsorption of creatinine. Able to uptake prostaglandin E2 (PGE2) and may contribute to PGE2 renal excretion. Also transports alpha-ketoglutarate and urate. Apart from the orotate/glutamate exchange, the counterions for the uptake of other SLC22A7/OAT2 substrates remain to be identified. In Pongo abelii (Sumatran orangutan), this protein is Solute carrier family 22 member 7 (SLC22A7).